A 201-amino-acid polypeptide reads, in one-letter code: MALHDENVVWHSHPVTPQQREQHHGHRGVVLWFTGLSGSGKSTVAGGLEEALHKLGVSTYLLDGDNVRHGLCSDLGFSDADRKENIRRVGEVANLMVEAGLVVLTAFISPHRAERQMVRERVGEGRFIEVFVDTPLAICEARDPKGLYKKARAGELRNFTGIDSVYEAPESAEIHLNGEQLVTNLVQQLLDLLRQNDIIRS.

A disordered region spans residues 1–23; sequence MALHDENVVWHSHPVTPQQREQH. An ATP-binding site is contributed by 35-42; that stretch reads GLSGSGKS. Ser109 serves as the catalytic Phosphoserine intermediate.

This sequence belongs to the APS kinase family.

It carries out the reaction adenosine 5'-phosphosulfate + ATP = 3'-phosphoadenylyl sulfate + ADP + H(+). Its pathway is sulfur metabolism; hydrogen sulfide biosynthesis; sulfite from sulfate: step 2/3. Catalyzes the synthesis of activated sulfate. This chain is Adenylyl-sulfate kinase, found in Escherichia coli O6:K15:H31 (strain 536 / UPEC).